The chain runs to 217 residues: Peptide methionine sulfoxide reductase MsrA (217 aa).

The active site involves cysteine 56.

It belongs to the MsrA Met sulfoxide reductase family.

The catalysed reaction is L-methionyl-[protein] + [thioredoxin]-disulfide + H2O = L-methionyl-(S)-S-oxide-[protein] + [thioredoxin]-dithiol. It catalyses the reaction [thioredoxin]-disulfide + L-methionine + H2O = L-methionine (S)-S-oxide + [thioredoxin]-dithiol. In terms of biological role, has an important function as a repair enzyme for proteins that have been inactivated by oxidation. Catalyzes the reversible oxidation-reduction of methionine sulfoxide in proteins to methionine. This Rippkaea orientalis (strain PCC 8801 / RF-1) (Cyanothece sp. (strain PCC 8801)) protein is Peptide methionine sulfoxide reductase MsrA.